The primary structure comprises 299 residues: Protoheme IX farnesyltransferase (299 aa).

A run of 9 helical transmembrane segments spans residues 27 to 47 (VVAL…HEHF), 53 to 73 (LIAL…NHLI), 97 to 117 (FNVL…LMLW), 121 to 141 (LTAY…TLYL), 149 to 169 (IVIA…SITG), 175 to 195 (AWVL…ALAI), 222 to 242 (ILLY…VGMA), 244 to 264 (YLYL…AIKL), and 273 to 293 (AIEM…ALLL).

The protein belongs to the UbiA prenyltransferase family. Protoheme IX farnesyltransferase subfamily.

Its subcellular location is the cell inner membrane. It carries out the reaction heme b + (2E,6E)-farnesyl diphosphate + H2O = Fe(II)-heme o + diphosphate. It functions in the pathway porphyrin-containing compound metabolism; heme O biosynthesis; heme O from protoheme: step 1/1. Functionally, converts heme B (protoheme IX) to heme O by substitution of the vinyl group on carbon 2 of heme B porphyrin ring with a hydroxyethyl farnesyl side group. This chain is Protoheme IX farnesyltransferase, found in Vibrio vulnificus (strain CMCP6).